The primary structure comprises 365 residues: 3-dehydroquinate synthase (365 aa).

Residues 72–77, 130–131, Lys-142, and Lys-151 each bind NAD(+); these read SGEKEK and TT. Glu-184, His-247, and His-264 together coordinate Zn(2+).

It belongs to the sugar phosphate cyclases superfamily. Dehydroquinate synthase family. The cofactor is Co(2+). Zn(2+) is required as a cofactor. Requires NAD(+) as cofactor.

It localises to the cytoplasm. It catalyses the reaction 7-phospho-2-dehydro-3-deoxy-D-arabino-heptonate = 3-dehydroquinate + phosphate. The protein operates within metabolic intermediate biosynthesis; chorismate biosynthesis; chorismate from D-erythrose 4-phosphate and phosphoenolpyruvate: step 2/7. Catalyzes the conversion of 3-deoxy-D-arabino-heptulosonate 7-phosphate (DAHP) to dehydroquinate (DHQ). The protein is 3-dehydroquinate synthase of Bacillus cereus (strain AH187).